A 522-amino-acid polypeptide reads, in one-letter code: Glutamate--cysteine ligase, chloroplastic (522 aa).

A chloroplast-targeting transit peptide spans 1-45; it reads MALMSQAGSSHCIYSEKMKCISGHSSITSNMEMLKMKDICFGNIS. C186 and C406 are oxidised to a cystine.

Belongs to the carboxylate-amine ligase family. Glutamate--cysteine ligase type 2 subfamily. In terms of assembly, homodimer or monomer when oxidized or reduced, respectively. Post-translationally, the Cys-186-Cys-406 disulfide bridge is known to modulate the enzyme activity according to the redox status. The oxidized form constitutes the active enzyme.

The protein localises to the plastid. The protein resides in the chloroplast. It carries out the reaction L-cysteine + L-glutamate + ATP = gamma-L-glutamyl-L-cysteine + ADP + phosphate + H(+). The protein operates within sulfur metabolism; glutathione biosynthesis; glutathione from L-cysteine and L-glutamate: step 1/2. The polypeptide is Glutamate--cysteine ligase, chloroplastic (GSH1) (Nicotiana tabacum (Common tobacco)).